A 737-amino-acid chain; its full sequence is Envelope glycoprotein H (737 aa).

The signal sequence occupies residues 1–25 (MLIRRRALWLTIPILIIMTSHKIMC). Residues 26–702 (AFDLSHVHSE…NFFLFSSKSP (677 aa)) lie on the Virion surface side of the membrane. Residues asparagine 62, asparagine 212, asparagine 365, asparagine 412, asparagine 448, asparagine 465, asparagine 544, asparagine 569, asparagine 603, and asparagine 683 are each glycosylated (N-linked (GlcNAc...) asparagine; by host). Residues 191–253 (GSVTLFGHIT…MMMYDDFEII (63 aa)) are interaction with gL. A helical membrane pass occupies residues 703–723 (GAIVLYIIIISLIVWTLYEII). Topologically, residues 724-737 (KLFCYKRQWQYQKL) are intravirion.

The protein belongs to the herpesviridae glycoprotein H family. As to quaternary structure, interacts with glycoprotein L (gL); this interaction is necessary for the correct processing and cell surface expression of gH. The heterodimer gH/gL seems to interact with gB trimers during fusion. Post-translationally, N-glycosylated, O-glycosylated, and sialylated.

The protein resides in the virion membrane. It localises to the host cell membrane. The protein localises to the host endosome membrane. Its function is as follows. The heterodimer glycoprotein H-glycoprotein L is required for the fusion of viral and plasma membranes leading to virus entry into the host cell. Following initial binding to host receptor, membrane fusion is mediated by the fusion machinery composed of gB and the heterodimer gH/gL. May also be involved in the fusion between the virion envelope and the outer nuclear membrane during virion morphogenesis. The sequence is that of Envelope glycoprotein H from Elephantid herpesvirus 1 (isolate Asian elephant/Berlin/Kiba/1998) (EIHV-1).